The chain runs to 327 residues: Beta-ketoacyl-[acyl-carrier-protein] synthase III (327 aa).

Residues cysteine 112 and histidine 253 contribute to the active site. Positions glutamine 254–arginine 258 are ACP-binding. The active site involves asparagine 283.

The protein belongs to the thiolase-like superfamily. FabH family. In terms of assembly, homodimer.

Its subcellular location is the cytoplasm. It catalyses the reaction malonyl-[ACP] + acetyl-CoA + H(+) = 3-oxobutanoyl-[ACP] + CO2 + CoA. It participates in lipid metabolism; fatty acid biosynthesis. Functionally, catalyzes the condensation reaction of fatty acid synthesis by the addition to an acyl acceptor of two carbons from malonyl-ACP. Catalyzes the first condensation reaction which initiates fatty acid synthesis and may therefore play a role in governing the total rate of fatty acid production. Possesses both acetoacetyl-ACP synthase and acetyl transacylase activities. Its substrate specificity determines the biosynthesis of branched-chain and/or straight-chain of fatty acids. The polypeptide is Beta-ketoacyl-[acyl-carrier-protein] synthase III (Chlamydia trachomatis serovar A (strain ATCC VR-571B / DSM 19440 / HAR-13)).